A 147-amino-acid polypeptide reads, in one-letter code: MSTYTPKAGDVTRTWHVIDATDVVLGRLAVQAANLLRGKHKPTFAPHVDGGDFVVIINADKVAISGNKREGKFLYHHSGHPGGLKSRSVGEVLDKNPDRLVEKAVVGMLPKNKLGRAISSKLKVYAGPNHPHAAQQPVPFEIKQVAQ.

This sequence belongs to the universal ribosomal protein uL13 family. In terms of assembly, part of the 50S ribosomal subunit.

Its function is as follows. This protein is one of the early assembly proteins of the 50S ribosomal subunit, although it is not seen to bind rRNA by itself. It is important during the early stages of 50S assembly. The polypeptide is Large ribosomal subunit protein uL13 (Rhodococcus opacus (strain B4)).